The following is a 221-amino-acid chain: Endonuclease V (221 aa).

The Mg(2+) site is built by D44 and D112.

It belongs to the endonuclease V family. Requires Mg(2+) as cofactor.

Its subcellular location is the cytoplasm. It catalyses the reaction Endonucleolytic cleavage at apurinic or apyrimidinic sites to products with a 5'-phosphate.. In terms of biological role, DNA repair enzyme involved in the repair of deaminated bases. Selectively cleaves double-stranded DNA at the second phosphodiester bond 3' to a deoxyinosine leaving behind the intact lesion on the nicked DNA. The chain is Endonuclease V from Nostoc punctiforme (strain ATCC 29133 / PCC 73102).